A 299-amino-acid chain; its full sequence is S-formylglutathione hydrolase (299 aa).

The Cu cation site is built by Met-1 and His-140. Catalysis depends on charge relay system residues Ser-161, Asp-241, and His-276.

The protein belongs to the esterase D family. Monomer.

Its subcellular location is the cytoplasm. The catalysed reaction is S-formylglutathione + H2O = formate + glutathione + H(+). In terms of biological role, serine hydrolase involved in the detoxification of formaldehyde. This chain is S-formylglutathione hydrolase, found in Saccharomyces cerevisiae (strain ATCC 204508 / S288c) (Baker's yeast).